Here is a 422-residue protein sequence, read N- to C-terminus: Charged multivesicular body protein 7 (422 aa).

Residues 234-304 adopt a coiled-coil conformation; it reads KLLSERLQSA…ERISAAETDR (71 aa). A disordered region spans residues 394 to 422; the sequence is RPTEWKMDQAAHSPADGSFLRSVPEPMLQ.

This sequence belongs to the SNF7 family.

The protein resides in the cytoplasm. Its subcellular location is the nucleus envelope. Its function is as follows. ESCRT-III-like protein required to recruit the ESCRT-III complex to the nuclear envelope during late anaphase. Together with SPAST, the ESCRT-III complex promotes nuclear envelope sealing and mitotic spindle disassembly during late anaphase. Plays a role in the endosomal sorting pathway. This chain is Charged multivesicular body protein 7 (chmp7), found in Xenopus laevis (African clawed frog).